A 407-amino-acid polypeptide reads, in one-letter code: Proteasomal ubiquitin receptor ADRM1 (407 aa).

T2 carries the post-translational modification N-acetylthreonine. S15 carries the post-translational modification Phosphoserine. The 114-residue stretch at 18-131 (ASNKYLVEFR…RKVNEYLNNP (114 aa)) folds into the Pru domain. A Glycyl lysine isopeptide (Lys-Gly) (interchain with G-Cter in ubiquitin) cross-link involves residue K34. Phosphotyrosine is present on Y127. 2 positions are modified to phosphoserine: S140 and S211. Disordered regions lie at residues 194-259 (LLGS…ASPT) and 379-407 (KAMQ…MSLD). Residue T217 is modified to Phosphothreonine. Residues 253–407 (STAASPTQPI…KDEEEDMSLD (155 aa)) form an interaction with UCHL5 region. Positions 277–391 (PAGPAGGQQV…QNNAKPEQKE (115 aa)) constitute a DEUBAD domain. The span at 387–398 (PEQKEGDTKDKK) shows a compositional bias: basic and acidic residues. A Phosphoserine modification is found at S405.

It belongs to the ADRM1 family. Component of the 19S proteasome regulatory particle complex. The 26S proteasome consists of a 20S core particle (CP) and two 19S regulatory subunits (RP). Interacts with the proteasomal scaffolding protein PSMD1. Interacts with deubiquitinase UCHL5; this interaction activates the auto-inhibited UCHL5 by deoligomerizing it. Interacts with UBQLN2 and ubiquitin. Post-translationally, ubiquitinated by UBE3C in response to proteotoxic stress.

It localises to the cytoplasm. Its subcellular location is the nucleus. In terms of biological role, component of the 26S proteasome, a multiprotein complex involved in the ATP-dependent degradation of ubiquitinated proteins. This complex plays a key role in the maintenance of protein homeostasis by removing misfolded or damaged proteins, which could impair cellular functions, and by removing proteins whose functions are no longer required. Therefore, the proteasome participates in numerous cellular processes, including cell cycle progression, apoptosis, or DNA damage repair. Within the complex, functions as a proteasomal ubiquitin receptor. Engages and activates 19S-associated deubiquitinases UCHL5 and PSMD14 during protein degradation. UCHL5 reversibly associate with the 19S regulatory particle whereas PSMD14 is an intrinsic subunit of the proteasome lid subcomplex. The chain is Proteasomal ubiquitin receptor ADRM1 (ADRM1) from Homo sapiens (Human).